Here is a 403-residue protein sequence, read N- to C-terminus: Phosphopentomutase (403 aa).

Residues D13, D298, H303, D339, H340, and H351 each coordinate Mn(2+).

Belongs to the phosphopentomutase family. It depends on Mn(2+) as a cofactor.

It is found in the cytoplasm. It catalyses the reaction 2-deoxy-alpha-D-ribose 1-phosphate = 2-deoxy-D-ribose 5-phosphate. It carries out the reaction alpha-D-ribose 1-phosphate = D-ribose 5-phosphate. The protein operates within carbohydrate degradation; 2-deoxy-D-ribose 1-phosphate degradation; D-glyceraldehyde 3-phosphate and acetaldehyde from 2-deoxy-alpha-D-ribose 1-phosphate: step 1/2. Functionally, isomerase that catalyzes the conversion of deoxy-ribose 1-phosphate (dRib-1-P) and ribose 1-phosphate (Rib-1-P) to deoxy-ribose 5-phosphate (dRib-5-P) and ribose 5-phosphate (Rib-5-P), respectively. The sequence is that of Phosphopentomutase from Streptococcus gordonii (strain Challis / ATCC 35105 / BCRC 15272 / CH1 / DL1 / V288).